The chain runs to 597 residues: MKHIRNFSIIAHIDHGKSTLSDRLIQVCGGLSDREMAAQVLDSMDLERERGITIKSQSVTLNYTAKDGETYQLNFIDTPGHVDFAYEVSRSLAACEGALLVVDAGQGVEAQTLANCYTAIEMDLEVVPILNKIDLPAADPERVAEEIEEIVGIDAMDATRCSAKTGLGVEDVLENIVSAIPAPEGDPDAPLQALIIDSWFDNYLGVVSLVRIKNGSLKKNDKIKVMSTGQAWGVDRLGIFTPKQVDTDVLNTGEVGWVVCGIKDILGAPVGDTLTLAKNGSDKPLPGFKKVKPQVYAGLFPVSSDDYENFRDALGKLSLNDASLFYEPENSAALGFGFRCGFLGMLHMEIIQERLEREYDLDLITTAPTVVYEVEKTDGELLYVDSPAKLPAINDIEEIREPIARCNILVPSDYLGNVITLCVEKRGLQVDMVYHGNQVAVTYDIPMAEVVLDFFDRLKSTSRGYASLDYNFQRFEASNMVRVDVLLNGDKVDALALITHKDQSQTRGRQLVEKMKEFIPRQMFDIAIQAAIGNHIIARSTVKQLRKNVIAKCYGGDVSRKKKLLKKQKEGKKRMKQIGNVELPQEAFLAILHVGKD.

The tr-type G domain occupies 2 to 184 (KHIRNFSIIA…NIVSAIPAPE (183 aa)). Residues 14-19 (DHGKST) and 131-134 (NKID) contribute to the GTP site.

Belongs to the TRAFAC class translation factor GTPase superfamily. Classic translation factor GTPase family. LepA subfamily.

It localises to the cell inner membrane. It catalyses the reaction GTP + H2O = GDP + phosphate + H(+). Functionally, required for accurate and efficient protein synthesis under certain stress conditions. May act as a fidelity factor of the translation reaction, by catalyzing a one-codon backward translocation of tRNAs on improperly translocated ribosomes. Back-translocation proceeds from a post-translocation (POST) complex to a pre-translocation (PRE) complex, thus giving elongation factor G a second chance to translocate the tRNAs correctly. Binds to ribosomes in a GTP-dependent manner. The sequence is that of Elongation factor 4 from Vibrio parahaemolyticus serotype O3:K6 (strain RIMD 2210633).